A 67-amino-acid polypeptide reads, in one-letter code: MKEKLHPAYQKARIVCVCGAQFEVGSTKKEMRVDICSKCHPFYTGMQRTVETRGRADKFRRKYGLGK.

Positions 16, 18, 36, and 39 each coordinate Zn(2+).

It belongs to the bacterial ribosomal protein bL31 family. Type A subfamily. As to quaternary structure, part of the 50S ribosomal subunit. It depends on Zn(2+) as a cofactor.

Its function is as follows. Binds the 23S rRNA. This chain is Large ribosomal subunit protein bL31, found in Desulforudis audaxviator (strain MP104C).